A 326-amino-acid chain; its full sequence is MAFTPFPPRQPTASARLPLTLMTLDDWALATITGADSEKYMQGQVTADVSQMTEDQHLQAAHCDAKGKMWSNLRLFRDGDGFAWIERRSVREPQLTELKKYAVFSKVTIAPDDERVLLGVAGFQARAALANLFSELPSKEKQVVREGATTLLWFEHPAERFLIVTDEATANMLTDKLRGEAELNNSQQWLALNIEAGFPVIDAANSGQFIPQATNLQALGGISFKKGCYTGQEMVARAKFRGANKRALWLLAGSASRLPEAGEDLELRMGENWRRTGTVLAAVKLEDGQVVVQVVMNNDMEPDSIFRVRDDANTLHIEPLPYSLEE.

Folate is bound by residues Trp27 and Trp189.

It belongs to the tRNA-modifying YgfZ family.

It is found in the cytoplasm. In terms of biological role, folate-binding protein involved in regulating the level of ATP-DnaA and in the modification of some tRNAs. It is probably a key factor in regulatory networks that act via tRNA modification, such as initiation of chromosomal replication. This is tRNA-modifying protein YgfZ from Shigella dysenteriae serotype 1 (strain Sd197).